Here is a 57-residue protein sequence, read N- to C-terminus: Large ribosomal subunit protein bL32 (57 aa).

The tract at residues 1–23 (MAVPKKKTSKSKRDKRRATWRHK) is disordered.

It belongs to the bacterial ribosomal protein bL32 family.

In Trichormus variabilis (strain ATCC 29413 / PCC 7937) (Anabaena variabilis), this protein is Large ribosomal subunit protein bL32.